The following is a 112-amino-acid chain: MLNEQKCEACSFDAIALTKEEQQSLLLQLSDWHLIERDDIPQLEKVYKFKNFKQAWAFSNKIAELAEEEFHHPSILLEWGKVTVTWWSHSIKGLHKNDFICASKCDALVLSE.

This sequence belongs to the pterin-4-alpha-carbinolamine dehydratase family.

It carries out the reaction (4aS,6R)-4a-hydroxy-L-erythro-5,6,7,8-tetrahydrobiopterin = (6R)-L-erythro-6,7-dihydrobiopterin + H2O. This chain is Putative pterin-4-alpha-carbinolamine dehydratase, found in Vibrio parahaemolyticus serotype O3:K6 (strain RIMD 2210633).